The sequence spans 369 residues: MKSGRFIGVMSGTSLDGVDVVLATIDEHRVAQLASLSWPIPVSLKQAVLDICQGQQLTLSQFGQLDTQLGRLFADAVNALLKEQNLQARDIVAIGCHGQTVWHEPTGVAPHTLQIGDNNQIVARTGITVVGDFRRRDIALGGQGAPLVPAFHHALLAHPTERRMVLNIGGIANLSLLIPGQPVGGYDTGPGNMLMDAWIWRQAGKPYDKDAEWARAGKVILPLLQNMLSDPYFSQPAPKSTGREYFNYGWLERHLRHFPGVDPRDVQATLAELTAVTISEQVLLSGGCERLMVCGGGSRNPLLMARLAVLLLGTEVTTTDAVGISGDDMEALAFAWLAWRTLAGLPGNLPSVTGASQETVLGAIFPANS.

Glycine 12–aspartate 19 contacts ATP.

The protein belongs to the anhydro-N-acetylmuramic acid kinase family.

The catalysed reaction is 1,6-anhydro-N-acetyl-beta-muramate + ATP + H2O = N-acetyl-D-muramate 6-phosphate + ADP + H(+). It functions in the pathway amino-sugar metabolism; 1,6-anhydro-N-acetylmuramate degradation. The protein operates within cell wall biogenesis; peptidoglycan recycling. In terms of biological role, catalyzes the specific phosphorylation of 1,6-anhydro-N-acetylmuramic acid (anhMurNAc) with the simultaneous cleavage of the 1,6-anhydro ring, generating MurNAc-6-P. Is required for the utilization of anhMurNAc either imported from the medium or derived from its own cell wall murein, and thus plays a role in cell wall recycling. This is Anhydro-N-acetylmuramic acid kinase from Shigella flexneri serotype 5b (strain 8401).